The primary structure comprises 50 residues: Single-stranded DNA-binding protein (50 aa).

As to quaternary structure, homodimer in the absence of DNA, monomer when binding DNA.

In terms of biological role, binds preferentially to single-stranded DNA and therefore, destabilizes double-stranded DNA. It is involved in DNA replication, repair and recombination. Binds ss-DNA as the replication fork advances and stimulates the replisome processivity and accuracy. The polypeptide is Single-stranded DNA-binding protein (32) (Enterobacteria phage RB27 (Bacteriophage RB27)).